The following is a 113-amino-acid chain: Immunoglobulin lambda variable 2-23 (113 aa).

An N-terminal signal peptide occupies residues 1–19 (MAWALLLLTLLTQDTGSWA). Q20 is subject to Pyrrolidone carboxylic acid. Residues 20–44 (QSALTQPASVSGSPGQSITISCTGT) are framework-1. Residues 20–113 (QSALTQPASV…EADYYCCSYA (94 aa)) form the Ig-like domain. The cysteines at positions 41 and 109 are disulfide-linked. The complementarity-determining-1 stretch occupies residues 45–53 (SSDVGSYNL). The interval 54-70 (VSWYQQHPGKAPKLMIY) is framework-2. A complementarity-determining-2 region spans residues 71–73 (EGS). The interval 73 to 92 (SKRPSGVSNRFSGSKSGNTA) is disordered. A framework-3 region spans residues 74–109 (KRPSGVSNRFSGSKSGNTASLTISGLQAEDEADYYC). The span at 78 to 92 (GVSNRFSGSKSGNTA) shows a compositional bias: polar residues. A complementarity-determining-3 region spans residues 110–113 (CSYA).

In terms of assembly, immunoglobulins are composed of two identical heavy chains and two identical light chains; disulfide-linked.

The protein resides in the secreted. It is found in the cell membrane. Its function is as follows. V region of the variable domain of immunoglobulin light chains that participates in the antigen recognition. Immunoglobulins, also known as antibodies, are membrane-bound or secreted glycoproteins produced by B lymphocytes. In the recognition phase of humoral immunity, the membrane-bound immunoglobulins serve as receptors which, upon binding of a specific antigen, trigger the clonal expansion and differentiation of B lymphocytes into immunoglobulins-secreting plasma cells. Secreted immunoglobulins mediate the effector phase of humoral immunity, which results in the elimination of bound antigens. The antigen binding site is formed by the variable domain of one heavy chain, together with that of its associated light chain. Thus, each immunoglobulin has two antigen binding sites with remarkable affinity for a particular antigen. The variable domains are assembled by a process called V-(D)-J rearrangement and can then be subjected to somatic hypermutations which, after exposure to antigen and selection, allow affinity maturation for a particular antigen. The chain is Immunoglobulin lambda variable 2-23 from Homo sapiens (Human).